Here is a 232-residue protein sequence, read N- to C-terminus: Probable caffeoyl-CoA O-methyltransferase At4g26220 (232 aa).

Position 7 (K7) interacts with substrate. Residues T49, E71, 73–74 (GV), S79, D97, and A126 each bind S-adenosyl-L-methionine. D149 is a binding site for substrate. D149 serves as a coordination point for a divalent metal cation. Residue D151 participates in S-adenosyl-L-methionine binding. Residues D175 and N176 each contribute to the a divalent metal cation site.

The protein belongs to the class I-like SAM-binding methyltransferase superfamily. Cation-dependent O-methyltransferase family. CCoAMT subfamily. It depends on a divalent metal cation as a cofactor.

The catalysed reaction is (E)-caffeoyl-CoA + S-adenosyl-L-methionine = (E)-feruloyl-CoA + S-adenosyl-L-homocysteine + H(+). The protein operates within aromatic compound metabolism; phenylpropanoid biosynthesis. Functionally, methylates caffeoyl-CoA to feruloyl-CoA and 5-hydroxyferuloyl-CoA to sinapoyl-CoA. Plays a role in the synthesis of feruloylated polysaccharides. Involved in the reinforcement of the plant cell wall. Also involved in the responding to wounding or pathogen challenge by the increased formation of cell wall-bound ferulic acid polymers. This chain is Probable caffeoyl-CoA O-methyltransferase At4g26220, found in Arabidopsis thaliana (Mouse-ear cress).